Consider the following 89-residue polypeptide: Small membrane A-kinase anchor protein (89 aa).

The interval 1-29 (MGCMKSKRRDPTQNSDSSEKVDGKPGKHG) is disordered. Gly2 carries the N-myristoyl glycine lipid modification. Residues 17–29 (SSEKVDGKPGKHG) show a composition bias toward basic and acidic residues.

The protein belongs to the small membrane AKAP family. May be palmitoylated at Cys-3.

Its subcellular location is the cell membrane. Functionally, binds to type I regulatory subunits of protein kinase A and may anchor/target them to the plasma membrane. This Danio rerio (Zebrafish) protein is Small membrane A-kinase anchor protein.